Reading from the N-terminus, the 825-residue chain is AMP deaminase 2 (825 aa).

The tract at residues 1–49 (MASYPSGSGKPKAKYPFKKRASLQASTAAPEARGGLGAPPLQSARSLPG) is disordered. The segment covering 11 to 21 (PKAKYPFKKRA) has biased composition (basic residues). Serine 22 is modified (phosphoserine). Arginine 45 is subject to Omega-N-methylarginine. A phosphoserine mark is found at serine 46, serine 64, and serine 80. Tyrosine 91 carries the phosphotyrosine modification. Serine 97 and serine 114 each carry phosphoserine. Residue threonine 134 is modified to Phosphothreonine. A phosphoserine mark is found at serine 136 and serine 138. 2 residues coordinate Zn(2+): histidine 364 and histidine 366. Substrate is bound by residues histidine 366 and 435–440 (KFNAKY). A Zn(2+)-binding site is contributed by histidine 633. Glutamate 636 is a substrate binding site. The Proton acceptor role is filled by histidine 655. Aspartate 710 contacts Zn(2+). Substrate is bound at residue 711 to 714 (DPLQ).

Belongs to the metallo-dependent hydrolases superfamily. Adenosine and AMP deaminases family. In terms of assembly, homotetramer. Zn(2+) serves as cofactor. Highly expressed in cerebellum.

The enzyme catalyses AMP + H2O + H(+) = IMP + NH4(+). The protein operates within purine metabolism; IMP biosynthesis via salvage pathway; IMP from AMP: step 1/1. Its function is as follows. AMP deaminase plays a critical role in energy metabolism. Catalyzes the deamination of AMP to IMP and plays an important role in the purine nucleotide cycle. The chain is AMP deaminase 2 from Homo sapiens (Human).